The primary structure comprises 502 residues: Lysine--tRNA ligase (502 aa).

Mg(2+) is bound by residues Glu412 and Glu419.

This sequence belongs to the class-II aminoacyl-tRNA synthetase family. As to quaternary structure, homodimer. It depends on Mg(2+) as a cofactor.

Its subcellular location is the cytoplasm. It catalyses the reaction tRNA(Lys) + L-lysine + ATP = L-lysyl-tRNA(Lys) + AMP + diphosphate. The protein is Lysine--tRNA ligase of Buchnera aphidicola subsp. Cinara cedri (strain Cc).